The primary structure comprises 489 residues: MGEARRGQNPHHVLGYGFHGTTLPNSMASANLFEQGGGGGGGAAYFGELEEALVHQVATLRRRAQQTATTTTSHHGHTTPFSTAAAAATATATARPPATLDIFPSWPMRRSSLPTPKDGCSNVTADTTDSESSSKNNGDQGAAAADMASQFDQIPQQQQKQHKKMAASSTHSDHRMTKTLDPKIMRRLAQNREAARKSRLRKKAYIQQLESSKLRLAQMEQDLERARSQGLLLGGSPGGNTSAGAAMFDAEYGRWLEDGGRRMAELHGGLHAHLPDGDLRAIVDDALAHYDELFRLRAAAAKADVFHLITGTWATPAERCFLWMGGFQPSDLLKTVAPQLDPLTEQQVVGICSLQQSSQQAEEALSQGLEQLHQSLAETVANGGSVVNEASLGSFMGYMALALGKLSNLEGFVIQADNLRQQTLHQMHRILTIRQAARCFLAIGEYHNRLRALSSLWASRPREILVADEGNCGELSIAAQPSESQFSAF.

Residues 87–99 (AATATATARPPAT) are compositionally biased toward low complexity. The disordered stretch occupies residues 87–181 (AATATATARP…SDHRMTKTLD (95 aa)). Over residues 121-139 (SNVTADTTDSESSSKNNGD) the composition is skewed to polar residues. The span at 148-159 (ASQFDQIPQQQQ) shows a compositional bias: low complexity. Over residues 171–181 (HSDHRMTKTLD) the composition is skewed to basic and acidic residues. The bZIP domain occupies 181-225 (DPKIMRRLAQNREAARKSRLRKKAYIQQLESSKLRLAQMEQDLER). The interval 183-203 (KIMRRLAQNREAARKSRLRKK) is basic motif. The segment at 209 to 223 (LESSKLRLAQMEQDL) is leucine-zipper. The DOG1 domain maps to 245–460 (AAMFDAEYGR…RALSSLWASR (216 aa)).

The protein belongs to the bZIP family.

Its subcellular location is the nucleus. Its function is as follows. Transcriptional regulator involved in defense response. The sequence is that of Transcription factor TGAL11 from Oryza sativa subsp. japonica (Rice).